The primary structure comprises 162 residues: Large ribosomal subunit protein uL10 (162 aa).

This sequence belongs to the universal ribosomal protein uL10 family. Part of the ribosomal stalk of the 50S ribosomal subunit. The N-terminus interacts with L11 and the large rRNA to form the base of the stalk. The C-terminus forms an elongated spine to which L12 dimers bind in a sequential fashion forming a multimeric L10(L12)X complex.

Its function is as follows. Forms part of the ribosomal stalk, playing a central role in the interaction of the ribosome with GTP-bound translation factors. This is Large ribosomal subunit protein uL10 from Vibrio vulnificus (strain CMCP6).